A 451-amino-acid polypeptide reads, in one-letter code: Tubulin alpha-2 chain (451 aa).

GTP-binding residues include Gln12, Asp73, Ser142, Gly146, Thr147, Thr181, Asn208, and Asn230. Asp73 serves as a coordination point for Mg(2+). Glu256 is an active-site residue.

The protein belongs to the tubulin family. In terms of assembly, dimer of alpha and beta chains. A typical microtubule is a hollow water-filled tube with an outer diameter of 25 nm and an inner diameter of 15 nM. Alpha-beta heterodimers associate head-to-tail to form protofilaments running lengthwise along the microtubule wall with the beta-tubulin subunit facing the microtubule plus end conferring a structural polarity. Microtubules usually have 13 protofilaments but different protofilament numbers can be found in some organisms and specialized cells. Requires Mg(2+) as cofactor.

It localises to the cytoplasm. It is found in the cytoskeleton. The catalysed reaction is GTP + H2O = GDP + phosphate + H(+). Functionally, tubulin is the major constituent of microtubules, a cylinder consisting of laterally associated linear protofilaments composed of alpha- and beta-tubulin heterodimers. Microtubules grow by the addition of GTP-tubulin dimers to the microtubule end, where a stabilizing cap forms. Below the cap, tubulin dimers are in GDP-bound state, owing to GTPase activity of alpha-tubulin. This chain is Tubulin alpha-2 chain (tubB), found in Emericella nidulans (strain FGSC A4 / ATCC 38163 / CBS 112.46 / NRRL 194 / M139) (Aspergillus nidulans).